The chain runs to 209 residues: Kynurenine formamidase (209 aa).

Position 20 (Trp20) interacts with substrate. Zn(2+) contacts are provided by His50, His54, and Asp56. The active-site Proton donor/acceptor is His60. Zn(2+) is bound by residues His161 and Glu173.

Belongs to the Cyclase 1 superfamily. KynB family. As to quaternary structure, homodimer. It depends on Zn(2+) as a cofactor.

The catalysed reaction is N-formyl-L-kynurenine + H2O = L-kynurenine + formate + H(+). It functions in the pathway amino-acid degradation; L-tryptophan degradation via kynurenine pathway; L-kynurenine from L-tryptophan: step 2/2. Functionally, catalyzes the hydrolysis of N-formyl-L-kynurenine to L-kynurenine, the second step in the kynurenine pathway of tryptophan degradation. This Bacillus thuringiensis (strain Al Hakam) protein is Kynurenine formamidase.